We begin with the raw amino-acid sequence, 102 residues long: Large ribosomal subunit protein uL24 (102 aa).

The protein belongs to the universal ribosomal protein uL24 family. As to quaternary structure, part of the 50S ribosomal subunit.

One of two assembly initiator proteins, it binds directly to the 5'-end of the 23S rRNA, where it nucleates assembly of the 50S subunit. Its function is as follows. One of the proteins that surrounds the polypeptide exit tunnel on the outside of the subunit. The chain is Large ribosomal subunit protein uL24 from Limosilactobacillus fermentum (strain NBRC 3956 / LMG 18251) (Lactobacillus fermentum).